Reading from the N-terminus, the 701-residue chain is Epithelial splicing regulatory protein 2 (701 aa).

3 consecutive RRM domains span residues 226–303, 327–407, and 448–523; these read TVIR…KATG, VIIR…RSTA, and CVRL…VEVF.

This sequence belongs to the ESRP family.

The protein localises to the nucleus. Functionally, mRNA splicing factor that regulates the formation of epithelial cell-specific isoforms. Specifically regulates the expression of FGFR2-IIIb, an epithelial cell-specific isoform of FGFR2. Acts by directly binding specific sequences in mRNAs. Binds the GU-rich sequence motifs in the ISE/ISS-3, a cis-element regulatory region present in the mRNA of FGFR2. The polypeptide is Epithelial splicing regulatory protein 2 (ESRP2) (Gallus gallus (Chicken)).